Consider the following 64-residue polypeptide: MPKMKTHKGAAKRFKKTGKGKIKRRKAFKSHILTKKTPKRKRNLRKPTVMKNKAEEKRIKRLLP.

Residues methionine 1–arginine 45 show a composition bias toward basic residues. A disordered region spans residues methionine 1–proline 64.

It belongs to the bacterial ribosomal protein bL35 family.

This chain is Large ribosomal subunit protein bL35, found in Natranaerobius thermophilus (strain ATCC BAA-1301 / DSM 18059 / JW/NM-WN-LF).